An 855-amino-acid chain; its full sequence is MTFYISSSLTPTHFSKPLNPSNTLFPSQFRGSLSSFVRRRKPTEAKLSSKFNLFPSRRNGLITCCSTSSFESTESSVSQEEDAESNRLFEKLRETERERLSNMEELERKANVQLERQLVMASDWSRTLLTMRGKLKGTEWDPETSHRINFSDFMKLLDSNSVQYMEYSNYGQTISVILPYYKDGEPLGEEEDSKKEIIFRRHIVDRMPIDGWNDVWKKLHQQIVNVEVFNVDVVPAEVYTTVATFVVWSMRLALFVSLYVWIDSITRPIYAKLIPCDLGTPTKKIRQPLKRQALGSLGKSRAKFISAEEKTGVTFDDFAGQEYIKRELQEIVRILKNDEEFQNKGIYCPKGVLLHGPPGTGKTLLAKAIAGEAGLPFFAANGTDFVEMFVGVAASRVKDLFASSRSYAPSIIFIDEIDAIGSKRGGPDIGGGGAEREQGLLQILTEMDGFKVTTSQVLVIGATNRLDILDPALLRKGRFDKIIRVGLPSKDGRLAILKVHARNKFFRSEDEKEELLQEVAENTEDFTGAELQNVLNEAGILTARKDLDYIGREELLEALKRQKGTFETGQEDSTEVPEELKLRLAYREAAVAVLACYLPDQYRPISETDINSIRSQPNMRYSETSGRVFARKSDYVNSIIRACAPRVVEEEMFGIENLCWISAKSTLEASQRAEFLILQTGMTAFGKAYYRNQRDLVPNLVPKLEALRDEYMRFAVEKCSSILQEYQSALEEITDVLLEKGEIKADEIWNIYNTAPRIPQKPVRPVDEYGALIYAGRWGIHGVSLPGRVTFSPGNIGFATFGAPRPMETQIISDDTWKLVDEIWDKKVEEIKAEAVIQIEEEKKKPQILMATHFF.

The N-terminal 78 residues, 1-78, are a transit peptide targeting the chloroplast; it reads MTFYISSSLT…SFESTESSVS (78 aa). Residues 242-262 form a helical membrane-spanning segment; the sequence is VATFVVWSMRLALFVSLYVWI. Residue 356-363 coordinates ATP; sequence GPPGTGKT.

This sequence belongs to the AAA ATPase family. In terms of assembly, homooligomer. Interacts with FtsHi2. In terms of tissue distribution, ubiquitous but preferentially expressed in young leaves.

It localises to the plastid. Its subcellular location is the chloroplast thylakoid membrane. In terms of biological role, functions in chloroplast biogenesis and chloroplast division. Required for plastid development during embryogenesis. Might be involved in chaperone functions or play a structural role in the thylakoid FtsH complex. The sequence is that of Probable inactive ATP-dependent zinc metalloprotease FTSHI 4, chloroplastic from Arabidopsis thaliana (Mouse-ear cress).